The primary structure comprises 255 residues: Large ribosomal subunit protein uL4 (255 aa).

Belongs to the universal ribosomal protein uL4 family. In terms of assembly, part of the 50S ribosomal subunit.

One of the primary rRNA binding proteins, this protein initially binds near the 5'-end of the 23S rRNA. It is important during the early stages of 50S assembly. It makes multiple contacts with different domains of the 23S rRNA in the assembled 50S subunit and ribosome. Functionally, forms part of the polypeptide exit tunnel. This Pyrococcus furiosus (strain ATCC 43587 / DSM 3638 / JCM 8422 / Vc1) protein is Large ribosomal subunit protein uL4.